The chain runs to 375 residues: Beta-1,3-N-acetylglucosaminyltransferase lunatic fringe (375 aa).

Residues 1–8 lie on the Cytoplasmic side of the membrane; that stretch reads MLKNWGKK. The helical; Signal-anchor for type II membrane protein transmembrane segment at 9-29 threads the bilayer; the sequence is LLLSIVGATLTCLLVLVVDQQ. At 30–375 the chain is on the lumenal side; sequence SRHMLETQSD…TPWCPWKAAY (346 aa). Residues 53–73 are disordered; that stretch reads DLDPANPGDGGDPANSAQDSG. R125 is a binding site for substrate. N-linked (GlcNAc...) asparagine glycosylation occurs at N163. Intrachain disulfides connect C164/C175 and C193/C256. D197 is a binding site for substrate. D198 contacts Mn(2+). D286 is a catalytic residue. Residue H310 coordinates Mn(2+). An intrachain disulfide couples C360 to C369.

This sequence belongs to the glycosyltransferase 31 family. It depends on Mn(2+) as a cofactor. Requires Co(2+) as cofactor. In terms of processing, a soluble form may be derived from the membrane form by proteolytic processing. Detected in the neural tube, the eye and the otic vesicle, expression coincides with the region that produces the medial, intermediate and lateral neurons.

It localises to the golgi apparatus membrane. It catalyses the reaction 3-O-(alpha-L-fucosyl)-L-threonyl-[EGF-like domain protein] + UDP-N-acetyl-alpha-D-glucosamine = 3-O-(N-acetyl-beta-D-glucosaminyl-(1-&gt;3)-alpha-L-fucosyl)-L-threonyl-[EGF-like domain protein] + UDP + H(+). It carries out the reaction 3-O-(alpha-L-fucosyl)-L-seryl-[EGF-like domain protein] + UDP-N-acetyl-alpha-D-glucosamine = 3-O-(N-acetyl-beta-D-glucosaminyl-(1-&gt;3)-alpha-L-fucosyl)-L-seryl-[EGF-like domain protein] + UDP + H(+). Its function is as follows. Glycosyltransferase that initiates the elongation of O-linked fucose residues attached to EGF-like repeats in the extracellular domain of Notch molecules. Essential mediator of somite segmentation and patterning. May be involved in mesoderm development. The sequence is that of Beta-1,3-N-acetylglucosaminyltransferase lunatic fringe (lfng) from Xenopus laevis (African clawed frog).